Here is a 338-residue protein sequence, read N- to C-terminus: Aspartate carbamoyltransferase catalytic subunit (338 aa).

Positions 57 and 58 each coordinate carbamoyl phosphate. An L-aspartate-binding site is contributed by Lys86. Arg107, His135, and Gln138 together coordinate carbamoyl phosphate. Residues Arg172 and Arg234 each coordinate L-aspartate. Carbamoyl phosphate contacts are provided by Leu274 and Pro275.

The protein belongs to the aspartate/ornithine carbamoyltransferase superfamily. ATCase family. As to quaternary structure, heterododecamer (2C3:3R2) of six catalytic PyrB chains organized as two trimers (C3), and six regulatory PyrI chains organized as three dimers (R2).

The catalysed reaction is carbamoyl phosphate + L-aspartate = N-carbamoyl-L-aspartate + phosphate + H(+). It functions in the pathway pyrimidine metabolism; UMP biosynthesis via de novo pathway; (S)-dihydroorotate from bicarbonate: step 2/3. Its function is as follows. Catalyzes the condensation of carbamoyl phosphate and aspartate to form carbamoyl aspartate and inorganic phosphate, the committed step in the de novo pyrimidine nucleotide biosynthesis pathway. This is Aspartate carbamoyltransferase catalytic subunit from Cellvibrio japonicus (strain Ueda107) (Pseudomonas fluorescens subsp. cellulosa).